The primary structure comprises 511 residues: UPF0288 protein MK0796 (511 aa).

This sequence belongs to the UPF0288 family.

This is UPF0288 protein MK0796 from Methanopyrus kandleri (strain AV19 / DSM 6324 / JCM 9639 / NBRC 100938).